Consider the following 101-residue polypeptide: Small ribosomal subunit protein uS14 (101 aa).

Belongs to the universal ribosomal protein uS14 family. As to quaternary structure, part of the 30S ribosomal subunit. Contacts proteins S3 and S10.

Its function is as follows. Binds 16S rRNA, required for the assembly of 30S particles and may also be responsible for determining the conformation of the 16S rRNA at the A site. This is Small ribosomal subunit protein uS14 from Sphingopyxis alaskensis (strain DSM 13593 / LMG 18877 / RB2256) (Sphingomonas alaskensis).